Reading from the N-terminus, the 249-residue chain is Pyridoxine 5'-phosphate synthase (249 aa).

Asparagine 7 is a binding site for 3-amino-2-oxopropyl phosphate. 9–10 (DH) is a binding site for 1-deoxy-D-xylulose 5-phosphate. Position 18 (arginine 18) interacts with 3-amino-2-oxopropyl phosphate. The Proton acceptor role is filled by histidine 43. The 1-deoxy-D-xylulose 5-phosphate site is built by arginine 45 and histidine 50. The active-site Proton acceptor is glutamate 70. Threonine 100 contacts 1-deoxy-D-xylulose 5-phosphate. Histidine 190 acts as the Proton donor in catalysis. 3-amino-2-oxopropyl phosphate is bound by residues glycine 191 and 212-213 (GH).

It belongs to the PNP synthase family. Homooctamer; tetramer of dimers.

It localises to the cytoplasm. The catalysed reaction is 3-amino-2-oxopropyl phosphate + 1-deoxy-D-xylulose 5-phosphate = pyridoxine 5'-phosphate + phosphate + 2 H2O + H(+). The protein operates within cofactor biosynthesis; pyridoxine 5'-phosphate biosynthesis; pyridoxine 5'-phosphate from D-erythrose 4-phosphate: step 5/5. Its function is as follows. Catalyzes the complicated ring closure reaction between the two acyclic compounds 1-deoxy-D-xylulose-5-phosphate (DXP) and 3-amino-2-oxopropyl phosphate (1-amino-acetone-3-phosphate or AAP) to form pyridoxine 5'-phosphate (PNP) and inorganic phosphate. The protein is Pyridoxine 5'-phosphate synthase of Synechococcus sp. (strain CC9902).